The chain runs to 568 residues: Proline--tRNA ligase (568 aa).

It belongs to the class-II aminoacyl-tRNA synthetase family. ProS type 1 subfamily. In terms of assembly, homodimer.

The protein localises to the cytoplasm. It catalyses the reaction tRNA(Pro) + L-proline + ATP = L-prolyl-tRNA(Pro) + AMP + diphosphate. Functionally, catalyzes the attachment of proline to tRNA(Pro) in a two-step reaction: proline is first activated by ATP to form Pro-AMP and then transferred to the acceptor end of tRNA(Pro). As ProRS can inadvertently accommodate and process non-cognate amino acids such as alanine and cysteine, to avoid such errors it has two additional distinct editing activities against alanine. One activity is designated as 'pretransfer' editing and involves the tRNA(Pro)-independent hydrolysis of activated Ala-AMP. The other activity is designated 'posttransfer' editing and involves deacylation of mischarged Ala-tRNA(Pro). The misacylated Cys-tRNA(Pro) is not edited by ProRS. This Aliarcobacter butzleri (strain RM4018) (Arcobacter butzleri) protein is Proline--tRNA ligase.